Here is an 882-residue protein sequence, read N- to C-terminus: DNA mismatch repair protein MutS (882 aa).

629 to 636 is a binding site for ATP; sequence GPNMGGKS.

Belongs to the DNA mismatch repair MutS family.

This protein is involved in the repair of mismatches in DNA. It is possible that it carries out the mismatch recognition step. This protein has a weak ATPase activity. In Ralstonia pickettii (strain 12J), this protein is DNA mismatch repair protein MutS.